A 249-amino-acid polypeptide reads, in one-letter code: 5'-nucleotidase SurE (249 aa).

Residues D8, D9, S39, and N91 each coordinate a divalent metal cation.

This sequence belongs to the SurE nucleotidase family. The cofactor is a divalent metal cation.

It localises to the cytoplasm. It carries out the reaction a ribonucleoside 5'-phosphate + H2O = a ribonucleoside + phosphate. Functionally, nucleotidase that shows phosphatase activity on nucleoside 5'-monophosphates. The chain is 5'-nucleotidase SurE from Ectopseudomonas mendocina (strain ymp) (Pseudomonas mendocina).